Reading from the N-terminus, the 858-residue chain is NEDD4-binding protein 1 (858 aa).

Residues 17 to 37 form a disordered region; sequence TCTEPPGGRQSPTASRAQPDS. Positions 26–37 are enriched in polar residues; sequence QSPTASRAQPDS. One can recognise a KH-like domain in the interval 96-180; sequence KEDVYKAKEY…VQQFVALFQE (85 aa). 2 disordered regions span residues 262–321 and 388–424; these read EDKT…TWTV and QKTQ…KEKE. Over residues 285 to 316 the composition is skewed to basic and acidic residues; that stretch reads RSSESEQRDTKRQYSLERREEEQCEEREREPT. Residues 389–418 show a composition bias toward polar residues; sequence KTQSTQGAQRTSRTPDPSPCANASSTSTSN. The 153-residue stretch at 598–750 folds into the RNase NYN domain; sequence LRHIIIDGSN…LGKHGPHLDE (153 aa). Polar residues predominate over residues 774-784; that stretch reads SVYSQAAQSTA. Residues 774-823 form a disordered region; sequence SVYSQAAQSTAHPSSPSHWPHSGPPDWHLPRPSPSPPPQRSPSETTELKR. Over residues 785 to 799 the composition is skewed to low complexity; the sequence is HPSSPSHWPHSGPPD. Residues 804–813 are compositionally biased toward pro residues; it reads RPSPSPPPQR. The coCUN stretch occupies residues 813–858; sequence RSPSETTELKRKLYDIFPDQKQRIDRILSDNPYMRDLNALSGLLLG.

It belongs to the N4BP1 family.

The protein resides in the nucleus. The protein localises to the nucleolus. Its subcellular location is the PML body. Its function is as follows. Potent suppressor of cytokine production that acts as a regulator of innate immune signaling and inflammation. Acts as a key negative regulator of select cytokine and chemokine responses elicited by TRIF-independent Toll-like receptors (TLRs), thereby limiting inflammatory cytokine responses to minor insults. Has ribonuclease activity. The chain is NEDD4-binding protein 1 from Danio rerio (Zebrafish).